A 283-amino-acid polypeptide reads, in one-letter code: Pre-mRNA-splicing factor CWC23 (283 aa).

In terms of domain architecture, J spans 15–87; it reads NLYDVLELPT…DVRPHYDRWL (73 aa).

This sequence belongs to the DnaJ family. As to quaternary structure, belongs to the CWC complex (or CEF1-associated complex), a spliceosome sub-complex reminiscent of a late-stage spliceosome composed of the U2, U5 and U6 snRNAs and at least BUD13, BUD31, BRR2, CDC40, CEF1, CLF1, CUS1, CWC2, CWC15, CWC21, CWC22, CWC23, CWC24, CWC25, CWC27, ECM2, HSH155, IST3, ISY1, LEA1, MSL1, NTC20, PRP8, PRP9, PRP11, PRP19, PRP21, PRP22, PRP45, PRP46, SLU7, SMB1, SMD1, SMD2, SMD3, SMX2, SMX3, SNT309, SNU114, SPP2, SYF1, SYF2, RSE1 and YJU2.

The protein localises to the cytoplasm. Its subcellular location is the nucleus. Functionally, involved in pre-mRNA splicing. May be involved in endoplasmic reticulum-associated protein degradation (ERAD) and required for growth at low and high temperatures. The chain is Pre-mRNA-splicing factor CWC23 (CWC23) from Saccharomyces cerevisiae (strain ATCC 204508 / S288c) (Baker's yeast).